A 506-amino-acid polypeptide reads, in one-letter code: Maturase K (506 aa).

Belongs to the intron maturase 2 family. MatK subfamily.

It is found in the plastid. Its subcellular location is the chloroplast. Usually encoded in the trnK tRNA gene intron. Probably assists in splicing its own and other chloroplast group II introns. This chain is Maturase K, found in Melilotus albus (White sweet clover).